Consider the following 380-residue polypeptide: Cytochrome b (380 aa).

The next 4 membrane-spanning stretches (helical) occupy residues 34 to 54 (FGSL…LLAA), 78 to 99 (WLIR…YLHI), 114 to 134 (WNTG…GYVL), and 179 to 199 (FFTL…IHLT). The heme b site is built by His-84 and His-98. Heme b is bound by residues His-183 and His-197. An a ubiquinone-binding site is contributed by His-202. 4 helical membrane passes run 227–247 (LKDI…ALFS), 289–309 (LGGV…PLLH), 321–341 (FSQL…WVGS), and 348–368 (FIII…ILFP).

Belongs to the cytochrome b family. In terms of assembly, the cytochrome bc1 complex contains 11 subunits: 3 respiratory subunits (MT-CYB, CYC1 and UQCRFS1), 2 core proteins (UQCRC1 and UQCRC2) and 6 low-molecular weight proteins (UQCRH/QCR6, UQCRB/QCR7, UQCRQ/QCR8, UQCR10/QCR9, UQCR11/QCR10 and a cleavage product of UQCRFS1). This cytochrome bc1 complex then forms a dimer. Requires heme b as cofactor.

The protein localises to the mitochondrion inner membrane. Its function is as follows. Component of the ubiquinol-cytochrome c reductase complex (complex III or cytochrome b-c1 complex) that is part of the mitochondrial respiratory chain. The b-c1 complex mediates electron transfer from ubiquinol to cytochrome c. Contributes to the generation of a proton gradient across the mitochondrial membrane that is then used for ATP synthesis. This chain is Cytochrome b (MT-CYB), found in Antigone antigone (Sarus crane).